Reading from the N-terminus, the 241-residue chain is Aspartate/glutamate leucyltransferase (241 aa).

This sequence belongs to the R-transferase family. Bpt subfamily.

It localises to the cytoplasm. It catalyses the reaction N-terminal L-glutamyl-[protein] + L-leucyl-tRNA(Leu) = N-terminal L-leucyl-L-glutamyl-[protein] + tRNA(Leu) + H(+). It carries out the reaction N-terminal L-aspartyl-[protein] + L-leucyl-tRNA(Leu) = N-terminal L-leucyl-L-aspartyl-[protein] + tRNA(Leu) + H(+). Its function is as follows. Functions in the N-end rule pathway of protein degradation where it conjugates Leu from its aminoacyl-tRNA to the N-termini of proteins containing an N-terminal aspartate or glutamate. The polypeptide is Aspartate/glutamate leucyltransferase (Parvibaculum lavamentivorans (strain DS-1 / DSM 13023 / NCIMB 13966)).